The following is a 359-amino-acid chain: Guanine nucleotide-binding protein subunit alpha-11 (359 aa).

S-palmitoyl cysteine attachment occurs at residues C9 and C10. In terms of domain architecture, G-alpha spans R38 to V359. Residues K41–T54 are G1 motif. Residues G46–S53 and L180–R183 each bind GTP. Residue S53 coordinates Mg(2+). Residues D178–T186 form a G2 motif region. T186 is a Mg(2+) binding site. The tract at residues F201–R210 is G3 motif. The segment at I270 to D277 is G4 motif. GTP is bound by residues N274–D277 and A331. Residues T329 to T334 are G5 motif.

Belongs to the G-alpha family. G(q) subfamily. In terms of assembly, g proteins are composed of 3 units; alpha, beta and gamma. The alpha chain contains the guanine nucleotide binding site. Interacts with RGS22. Interacts with NTSR1.

The protein resides in the cell membrane. It localises to the cytoplasm. The enzyme catalyses GTP + H2O = GDP + phosphate + H(+). Guanine nucleotide-binding proteins (G proteins) function as transducers downstream of G protein-coupled receptors (GPCRs) in numerous signaling cascades. The alpha chain contains the guanine nucleotide binding site and alternates between an active, GTP-bound state and an inactive, GDP-bound state. Signaling by an activated GPCR promotes GDP release and GTP binding. The alpha subunit has a low GTPase activity that converts bound GTP to GDP, thereby terminating the signal. Both GDP release and GTP hydrolysis are modulated by numerous regulatory proteins. Signaling is mediated via phospholipase C-beta-dependent inositol lipid hydrolysis for signal propagation: activates phospholipase C-beta: following GPCR activation, GNA11 activates PLC-beta (PLCB1, PLCB2, PLCB3 or PLCB4), leading to production of diacylglycerol (DAG) and inositol 1,4,5-trisphosphate (IP3). Transduces FFAR4 signaling in response to long-chain fatty acids (LCFAs). Together with GNAQ, required for heart development. In the respiratory epithelium, transmits OXGR1-dependent signals that lead to downstream intracellular Ca(2+) release and mucocilliary clearance of airborne pathogens. This Mus musculus (Mouse) protein is Guanine nucleotide-binding protein subunit alpha-11 (Gna11).